The primary structure comprises 439 residues: Ribosomal protein uS12 methylthiotransferase RimO (439 aa).

In terms of domain architecture, MTTase N-terminal spans 7-119 (KQLCLISLGC…IDIMIAKKQN (113 aa)). Residues Cys-16, Cys-50, Cys-82, Cys-151, Cys-155, and Cys-158 each coordinate [4Fe-4S] cluster. Residues 137–365 (TGSSVHAYVK…NKIALKHQNN (229 aa)) form the Radical SAM core domain.

Belongs to the methylthiotransferase family. RimO subfamily. [4Fe-4S] cluster serves as cofactor.

The protein localises to the cytoplasm. It catalyses the reaction L-aspartate(89)-[ribosomal protein uS12]-hydrogen + (sulfur carrier)-SH + AH2 + 2 S-adenosyl-L-methionine = 3-methylsulfanyl-L-aspartate(89)-[ribosomal protein uS12]-hydrogen + (sulfur carrier)-H + 5'-deoxyadenosine + L-methionine + A + S-adenosyl-L-homocysteine + 2 H(+). In terms of biological role, catalyzes the methylthiolation of an aspartic acid residue of ribosomal protein uS12. This is Ribosomal protein uS12 methylthiotransferase RimO from Helicobacter pylori (strain Shi470).